The chain runs to 819 residues: Leucine--tRNA ligase (819 aa).

The short motif at Pro-36–His-46 is the 'HIGH' region element. The 'KMSKS' region motif lies at Lys-586–Ser-590. Lys-589 is an ATP binding site.

Belongs to the class-I aminoacyl-tRNA synthetase family.

It is found in the cytoplasm. The catalysed reaction is tRNA(Leu) + L-leucine + ATP = L-leucyl-tRNA(Leu) + AMP + diphosphate. This is Leucine--tRNA ligase from Wolbachia pipientis subsp. Culex pipiens (strain wPip).